The sequence spans 268 residues: Tryptophan synthase alpha chain (268 aa).

Catalysis depends on proton acceptor residues glutamate 49 and aspartate 60.

Belongs to the TrpA family. In terms of assembly, tetramer of two alpha and two beta chains.

It catalyses the reaction (1S,2R)-1-C-(indol-3-yl)glycerol 3-phosphate + L-serine = D-glyceraldehyde 3-phosphate + L-tryptophan + H2O. It functions in the pathway amino-acid biosynthesis; L-tryptophan biosynthesis; L-tryptophan from chorismate: step 5/5. Functionally, the alpha subunit is responsible for the aldol cleavage of indoleglycerol phosphate to indole and glyceraldehyde 3-phosphate. The chain is Tryptophan synthase alpha chain from Yersinia pseudotuberculosis serotype O:3 (strain YPIII).